Consider the following 211-residue polypeptide: MTVIAVIDYDMGNLHSACKGLENAGAQTVVSDRPEDLFAADAVVLPGVGAFDPAMQHLRSRQLVPVIHDLIASGKPFLGICLGLQILFEHSEEGQEPGLGILAGTVKRFDPEPGLTIPHMGWNQLDLTQPGLPLWQQLELRPWLYFVHSYYVEPADLEVQAATITHGSQTVTAAIARNNLVAVQFHPEKSADAGLQILANFVSQIKAPVLV.

Residues 3-211 (VIAVIDYDMG…VSQIKAPVLV (209 aa)) enclose the Glutamine amidotransferase type-1 domain. Catalysis depends on Cys-81, which acts as the Nucleophile. Catalysis depends on residues His-186 and Glu-188.

Heterodimer of HisH and HisF.

It is found in the cytoplasm. The enzyme catalyses 5-[(5-phospho-1-deoxy-D-ribulos-1-ylimino)methylamino]-1-(5-phospho-beta-D-ribosyl)imidazole-4-carboxamide + L-glutamine = D-erythro-1-(imidazol-4-yl)glycerol 3-phosphate + 5-amino-1-(5-phospho-beta-D-ribosyl)imidazole-4-carboxamide + L-glutamate + H(+). The catalysed reaction is L-glutamine + H2O = L-glutamate + NH4(+). It participates in amino-acid biosynthesis; L-histidine biosynthesis; L-histidine from 5-phospho-alpha-D-ribose 1-diphosphate: step 5/9. Functionally, IGPS catalyzes the conversion of PRFAR and glutamine to IGP, AICAR and glutamate. The HisH subunit catalyzes the hydrolysis of glutamine to glutamate and ammonia as part of the synthesis of IGP and AICAR. The resulting ammonia molecule is channeled to the active site of HisF. The sequence is that of Imidazole glycerol phosphate synthase subunit HisH from Cyanothece sp. (strain PCC 7425 / ATCC 29141).